The sequence spans 156 residues: Transcription antitermination protein NusB (156 aa).

Belongs to the NusB family.

Its function is as follows. Involved in transcription antitermination. Required for transcription of ribosomal RNA (rRNA) genes. Binds specifically to the boxA antiterminator sequence of the ribosomal RNA (rrn) operons. This chain is Transcription antitermination protein NusB, found in Mycolicibacterium paratuberculosis (strain ATCC BAA-968 / K-10) (Mycobacterium paratuberculosis).